We begin with the raw amino-acid sequence, 189 residues long: dCTP deaminase (189 aa).

DCTP-binding positions include Lys-112 to Arg-117, Thr-136 to Glu-138, Gln-157, Tyr-171, and Gln-181. The active-site Proton donor/acceptor is Glu-138.

The protein belongs to the dCTP deaminase family. In terms of assembly, homotrimer.

The enzyme catalyses dCTP + H2O + H(+) = dUTP + NH4(+). It participates in pyrimidine metabolism; dUMP biosynthesis; dUMP from dCTP (dUTP route): step 1/2. Catalyzes the deamination of dCTP to dUTP. The polypeptide is dCTP deaminase (Burkholderia mallei (strain NCTC 10247)).